Reading from the N-terminus, the 157-residue chain is MGIFTFEDESTTTVAPARLYKALVKDADTIIPKAVEAIQSVEIVEGNGGPGTIKKLTLIEGGETKYVLHKIEAIDEANFGYNYSIVGGIGLPDTIEKISFETKLFEGANGGSIGKVTIKIETKGDAQPNEEEGKAAKARGDAFFKAIENYLIAHPEY.

D8 provides a ligand contact to trans-zeatin. Positions 32, 35, and 38 each coordinate Ca(2+). Residues E60, H69, Y81, and Y83 each contribute to the trans-zeatin site.

It belongs to the BetVI family.

Its subcellular location is the cytoplasm. The protein localises to the cytosol. Class II ribonuclease (RNase). Binds to cytokinins. Interacts with melatonin. In Lupinus luteus (European yellow lupine), this protein is Class 10 plant pathogenesis-related protein 2E.